The chain runs to 207 residues: Dephospho-CoA kinase (207 aa).

Residues 5–203 (AVGLTGGVAC…ARYRALASVF (199 aa)) form the DPCK domain. 13-18 (ACGKSL) is a binding site for ATP.

Belongs to the CoaE family.

The protein localises to the cytoplasm. The enzyme catalyses 3'-dephospho-CoA + ATP = ADP + CoA + H(+). It participates in cofactor biosynthesis; coenzyme A biosynthesis; CoA from (R)-pantothenate: step 5/5. Catalyzes the phosphorylation of the 3'-hydroxyl group of dephosphocoenzyme A to form coenzyme A. The protein is Dephospho-CoA kinase of Xylella fastidiosa (strain Temecula1 / ATCC 700964).